Here is a 1039-residue protein sequence, read N- to C-terminus: L-arabinokinase (1039 aa).

The helical transmembrane segment at 662–678 (AAYVAGTILVLMIELGV) threads the bilayer. 693–703 (PEGKGVSSSAA) contributes to the ATP binding site. Catalysis depends on aspartate 745, which acts as the Proton acceptor.

The protein belongs to the GHMP kinase family.

It localises to the membrane. It carries out the reaction L-arabinose + ATP = beta-L-arabinose 1-phosphate + ADP + H(+). Its function is as follows. Arabinose kinase. Involved in the salvage pathway which converts free L-arabinose to UDP-L-arabinose. May play a role in arabinose transport. In Arabidopsis thaliana (Mouse-ear cress), this protein is L-arabinokinase (ARA1).